Consider the following 95-residue polypeptide: Co-chaperonin GroES (95 aa).

It belongs to the GroES chaperonin family. As to quaternary structure, heptamer of 7 subunits arranged in a ring. Interacts with the chaperonin GroEL.

The protein resides in the cytoplasm. Together with the chaperonin GroEL, plays an essential role in assisting protein folding. The GroEL-GroES system forms a nano-cage that allows encapsulation of the non-native substrate proteins and provides a physical environment optimized to promote and accelerate protein folding. GroES binds to the apical surface of the GroEL ring, thereby capping the opening of the GroEL channel. The polypeptide is Co-chaperonin GroES (Chlorobium luteolum (strain DSM 273 / BCRC 81028 / 2530) (Pelodictyon luteolum)).